A 125-amino-acid polypeptide reads, in one-letter code: Ribosome-binding factor A (125 aa).

It belongs to the RbfA family. As to quaternary structure, monomer. Binds 30S ribosomal subunits, but not 50S ribosomal subunits or 70S ribosomes.

The protein localises to the cytoplasm. Functionally, one of several proteins that assist in the late maturation steps of the functional core of the 30S ribosomal subunit. Associates with free 30S ribosomal subunits (but not with 30S subunits that are part of 70S ribosomes or polysomes). Required for efficient processing of 16S rRNA. May interact with the 5'-terminal helix region of 16S rRNA. The sequence is that of Ribosome-binding factor A from Chloroherpeton thalassium (strain ATCC 35110 / GB-78).